Here is a 512-residue protein sequence, read N- to C-terminus: Alpha-amylase 1 (512 aa).

An N-terminal signal peptide occupies residues 1–25 (MRFSTEGFTSKVVAAILAFSRLVSA). A disulfide bridge connects residues Cys-66 and Cys-74. Trp-119 lines the substrate pocket. Asn-157 lines the Ca(2+) pocket. Position 158 (His-158) interacts with substrate. Cys-186 and Cys-200 are disulfide-bonded. Residues Glu-198 and Asp-211 each contribute to the Ca(2+) site. An N-linked (GlcNAc...) asparagine glycan is attached at Asn-233. Arg-240 is a substrate binding site. Ca(2+) contacts are provided by Asp-242, His-246, and Glu-266. Asp-242 functions as the Nucleophile in the catalytic mechanism. A substrate-binding site is contributed by 245 to 246 (KH). Glu-266 serves as the catalytic Proton donor. Gly-270 provides a ligand contact to substrate. An intrachain disulfide couples Cys-276 to Cys-319. Positions 333 and 380 each coordinate substrate. An intrachain disulfide couples Cys-475 to Cys-510.

It belongs to the glycosyl hydrolase 13 family. Ca(2+) is required as a cofactor.

It localises to the secreted. It carries out the reaction Endohydrolysis of (1-&gt;4)-alpha-D-glucosidic linkages in polysaccharides containing three or more (1-&gt;4)-alpha-linked D-glucose units.. Alpha-amylase expression underlies catabolite repression by glucose. In Schwanniomyces occidentalis (Yeast), this protein is Alpha-amylase 1 (AMY1).